Consider the following 447-residue polypeptide: Phosphoglucosamine mutase (447 aa).

Residue S102 is the Phosphoserine intermediate of the active site. Residues S102, D241, D243, and D245 each coordinate Mg(2+). S102 is modified (phosphoserine).

This sequence belongs to the phosphohexose mutase family. Mg(2+) is required as a cofactor. In terms of processing, activated by phosphorylation.

The enzyme catalyses alpha-D-glucosamine 1-phosphate = D-glucosamine 6-phosphate. Its function is as follows. Catalyzes the conversion of glucosamine-6-phosphate to glucosamine-1-phosphate. The chain is Phosphoglucosamine mutase from Symbiobacterium thermophilum (strain DSM 24528 / JCM 14929 / IAM 14863 / T).